We begin with the raw amino-acid sequence, 162 residues long: Allantoicase (162 aa).

The protein belongs to the allantoicase family. As to quaternary structure, homohexamer. As to expression, expressed in zygote.

The catalysed reaction is allantoate + H2O = (S)-ureidoglycolate + urea. It functions in the pathway nitrogen metabolism; (S)-allantoin degradation; (S)-ureidoglycolate from allantoate (aminidohydrolase route): step 1/1. In terms of biological role, catalyzes the degradation of allantoate to (-)-ureidoglycolate and (+)-ureidoglycolate to glyoxylate. This Chlamydomonas reinhardtii (Chlamydomonas smithii) protein is Allantoicase.